The sequence spans 248 residues: Homeobox protein BarH-like 1 (248 aa).

Residues 135–194 constitute a DNA-binding region (homeobox); it reads GRRSRTVFTELQLMGLEKRFEKQKYLSTPDRIDLAESLGLSQLQVKTWYQNRRMKWKKIV. A disordered region spans residues 197-248; the sequence is GGGLESPTKPKGRPKKNSIPTSEQLSEQERTREADRLSDGGASSLSDANQEE. Basic and acidic residues predominate over residues 223 to 234; the sequence is EQERTREADRLS. Residues 237–248 are compositionally biased toward polar residues; the sequence is GASSLSDANQEE.

Belongs to the BAR homeobox family.

It is found in the nucleus. In terms of biological role, transcription factor, is involved in craniofacial development, and in stomach organogenesis. The sequence is that of Homeobox protein BarH-like 1 (barx1) from Danio rerio (Zebrafish).